The sequence spans 309 residues: Elongation factor Ts (309 aa).

Positions 82 to 85 are involved in Mg(2+) ion dislocation from EF-Tu; the sequence is TDFV.

This sequence belongs to the EF-Ts family.

The protein localises to the cytoplasm. Functionally, associates with the EF-Tu.GDP complex and induces the exchange of GDP to GTP. It remains bound to the aminoacyl-tRNA.EF-Tu.GTP complex up to the GTP hydrolysis stage on the ribosome. The chain is Elongation factor Ts from Rickettsia typhi (strain ATCC VR-144 / Wilmington).